Consider the following 307-residue polypeptide: Aspartate carbamoyltransferase catalytic subunit (307 aa).

Carbamoyl phosphate is bound by residues R58 and T59. K86 serves as a coordination point for L-aspartate. Residues R108, H138, and Q141 each coordinate carbamoyl phosphate. The L-aspartate site is built by R171 and R223. The carbamoyl phosphate site is built by A264 and P265.

It belongs to the aspartate/ornithine carbamoyltransferase superfamily. ATCase family. In terms of assembly, heterododecamer (2C3:3R2) of six catalytic PyrB chains organized as two trimers (C3), and six regulatory PyrI chains organized as three dimers (R2).

It carries out the reaction carbamoyl phosphate + L-aspartate = N-carbamoyl-L-aspartate + phosphate + H(+). It participates in pyrimidine metabolism; UMP biosynthesis via de novo pathway; (S)-dihydroorotate from bicarbonate: step 2/3. Catalyzes the condensation of carbamoyl phosphate and aspartate to form carbamoyl aspartate and inorganic phosphate, the committed step in the de novo pyrimidine nucleotide biosynthesis pathway. This Streptococcus suis (strain 98HAH33) protein is Aspartate carbamoyltransferase catalytic subunit.